A 360-amino-acid polypeptide reads, in one-letter code: tRNA N6-adenosine threonylcarbamoyltransferase (360 aa).

Histidine 115 and histidine 119 together coordinate Fe cation. Substrate contacts are provided by residues leucine 137 to glycine 141, aspartate 170, glycine 183, and asparagine 283. Residue aspartate 311 coordinates Fe cation.

It belongs to the KAE1 / TsaD family. Fe(2+) is required as a cofactor.

It is found in the cytoplasm. It carries out the reaction L-threonylcarbamoyladenylate + adenosine(37) in tRNA = N(6)-L-threonylcarbamoyladenosine(37) in tRNA + AMP + H(+). In terms of biological role, required for the formation of a threonylcarbamoyl group on adenosine at position 37 (t(6)A37) in tRNAs that read codons beginning with adenine. Is involved in the transfer of the threonylcarbamoyl moiety of threonylcarbamoyl-AMP (TC-AMP) to the N6 group of A37, together with TsaE and TsaB. TsaD likely plays a direct catalytic role in this reaction. The protein is tRNA N6-adenosine threonylcarbamoyltransferase of Rhizobium meliloti (strain 1021) (Ensifer meliloti).